Consider the following 208-residue polypeptide: Small ribosomal subunit protein uS5 (208 aa).

Residues 48–111 (LEDEVLDINM…DAAKLDITYI (64 aa)) form the S5 DRBM domain.

Belongs to the universal ribosomal protein uS5 family. In terms of assembly, part of the 30S ribosomal subunit. Contacts protein S4.

Its function is as follows. With S4 and S12 plays an important role in translational accuracy. The polypeptide is Small ribosomal subunit protein uS5 (Methanosarcina barkeri (strain Fusaro / DSM 804)).